A 316-amino-acid chain; its full sequence is Methionyl-tRNA formyltransferase (316 aa).

114-117 serves as a coordination point for (6S)-5,6,7,8-tetrahydrofolate; the sequence is SLLP.

Belongs to the Fmt family.

The enzyme catalyses L-methionyl-tRNA(fMet) + (6R)-10-formyltetrahydrofolate = N-formyl-L-methionyl-tRNA(fMet) + (6S)-5,6,7,8-tetrahydrofolate + H(+). In terms of biological role, attaches a formyl group to the free amino group of methionyl-tRNA(fMet). The formyl group appears to play a dual role in the initiator identity of N-formylmethionyl-tRNA by promoting its recognition by IF2 and preventing the misappropriation of this tRNA by the elongation apparatus. The polypeptide is Methionyl-tRNA formyltransferase (Aromatoleum aromaticum (strain DSM 19018 / LMG 30748 / EbN1) (Azoarcus sp. (strain EbN1))).